The chain runs to 275 residues: 3-methyl-2-oxobutanoate hydroxymethyltransferase (275 aa).

2 residues coordinate Mg(2+): D51 and D90. Residues 51–52 (DS), D90, and K120 contribute to the 3-methyl-2-oxobutanoate site. E122 serves as a coordination point for Mg(2+). E189 functions as the Proton acceptor in the catalytic mechanism.

Belongs to the PanB family. As to quaternary structure, homodecamer; pentamer of dimers. Requires Mg(2+) as cofactor.

Its subcellular location is the cytoplasm. It carries out the reaction 3-methyl-2-oxobutanoate + (6R)-5,10-methylene-5,6,7,8-tetrahydrofolate + H2O = 2-dehydropantoate + (6S)-5,6,7,8-tetrahydrofolate. It participates in cofactor biosynthesis; (R)-pantothenate biosynthesis; (R)-pantoate from 3-methyl-2-oxobutanoate: step 1/2. In terms of biological role, catalyzes the reversible reaction in which hydroxymethyl group from 5,10-methylenetetrahydrofolate is transferred onto alpha-ketoisovalerate to form ketopantoate. The polypeptide is 3-methyl-2-oxobutanoate hydroxymethyltransferase (Caulobacter vibrioides (strain ATCC 19089 / CIP 103742 / CB 15) (Caulobacter crescentus)).